Here is a 413-residue protein sequence, read N- to C-terminus: Floricaula/leafy homolog 1 (413 aa).

Disordered regions lie at residues 154–177 (EGLSEEPVQQQEREAVGSGGGGTT) and 191–239 (QRRR…RQRE). Basic and acidic residues predominate over residues 201–210 (GRERRGRASA). Acidic residues predominate over residues 211–225 (EEDEETEEGQEDEWN). DNA-binding regions lie at residues 238–242 (REHPF), 307–314 (NKPKMRHY), and 378–381 (YVPT).

This sequence belongs to the FLO/LFY family. In terms of tissue distribution, expressed in floral meristems and in indeterminate vegetative meristems.

The protein localises to the nucleus. Probable transcription factor that act to specify determinacy in the progenitor cells for both flowers and leaves. In Nicotiana tabacum (Common tobacco), this protein is Floricaula/leafy homolog 1 (FL1).